A 171-amino-acid polypeptide reads, in one-letter code: 3-hydroxyanthranilate 3,4-dioxygenase (171 aa).

R45 is a binding site for O2. Fe cation-binding residues include H49, E55, and H93. E55 is a substrate binding site. 2 residues coordinate substrate: R97 and E107. Residues C122, C125, C159, and C162 each contribute to the a divalent metal cation site.

It belongs to the 3-HAO family. Fe(2+) is required as a cofactor.

It localises to the cytoplasm. The catalysed reaction is 3-hydroxyanthranilate + O2 = (2Z,4Z)-2-amino-3-carboxymuconate 6-semialdehyde. It functions in the pathway cofactor biosynthesis; NAD(+) biosynthesis; quinolinate from L-kynurenine: step 3/3. In terms of biological role, catalyzes the oxidative ring opening of 3-hydroxyanthranilate to 2-amino-3-carboxymuconate semialdehyde, which spontaneously cyclizes to quinolinate. This Candida albicans (strain SC5314 / ATCC MYA-2876) (Yeast) protein is 3-hydroxyanthranilate 3,4-dioxygenase.